A 162-amino-acid chain; its full sequence is MARVEL domain-containing protein 1 (162 aa).

Residues 1–17 are Cytoplasmic-facing; that stretch reads MPTQPQEKRSFLQFLKS. The MARVEL domain occupies 14–155; sequence FLKSFVGIVR…SGIYCSCRKC (142 aa). Residues 18-38 traverse the membrane as a helical segment; it reads FVGIVRVLQILLGAGLWVTIA. Residues 39-47 are Extracellular-facing; it reads ANKYEGSIH. A helical transmembrane segment spans residues 48–68; that stretch reads FVLFVAVLFWLLTLAIFILTL. The Cytoplasmic segment spans residues 69 to 86; that stretch reads LDKQDLVPIVGGERWLLS. A helical membrane pass occupies residues 87–107; sequence NLIHDVVATLLYLSTIGIMIY. Over 108–127 the chain is Extracellular; that stretch reads KTQKNSYCNLDVYKHHCLYK. A helical transmembrane segment spans residues 128–148; the sequence is VYLTASVFACLTAAVYLLSGI. The Cytoplasmic segment spans residues 149–162; that stretch reads YCSCRKCRGERTVV.

It is found in the membrane. The protein resides in the nucleus. The protein is MARVEL domain-containing protein 1 (marveld1) of Danio rerio (Zebrafish).